The primary structure comprises 301 residues: Hydroxyquinol 1,2-dioxygenase (301 aa).

The Fe cation site is built by tyrosine 169, tyrosine 202, histidine 226, and histidine 228.

It belongs to the intradiol ring-cleavage dioxygenase family. Fe(3+) serves as cofactor.

It carries out the reaction benzene-1,2,4-triol + O2 = maleylacetate + 2 H(+). Its pathway is aromatic compound metabolism. In terms of biological role, involved in resorcinol degradation. Catalyzes the conversion of hydroxyquinol to malelylacetate. Also shows weak activity with catechol, 3-methylcatechol and 4-methylcatechol, but cannot use 4-chlorocatechol, 4-nitrocatechol or protocatechuate. The polypeptide is Hydroxyquinol 1,2-dioxygenase (Corynebacterium glutamicum (strain ATCC 13032 / DSM 20300 / JCM 1318 / BCRC 11384 / CCUG 27702 / LMG 3730 / NBRC 12168 / NCIMB 10025 / NRRL B-2784 / 534)).